Reading from the N-terminus, the 211-residue chain is Peptidyl-tRNA hydrolase (211 aa).

TRNA is bound at residue Tyr-17. The Proton acceptor role is filled by His-22. 3 residues coordinate tRNA: Phe-79, Asn-81, and Asn-127.

It belongs to the PTH family. Monomer.

It is found in the cytoplasm. The enzyme catalyses an N-acyl-L-alpha-aminoacyl-tRNA + H2O = an N-acyl-L-amino acid + a tRNA + H(+). In terms of biological role, hydrolyzes ribosome-free peptidyl-tRNAs (with 1 or more amino acids incorporated), which drop off the ribosome during protein synthesis, or as a result of ribosome stalling. Its function is as follows. Catalyzes the release of premature peptidyl moieties from peptidyl-tRNA molecules trapped in stalled 50S ribosomal subunits, and thus maintains levels of free tRNAs and 50S ribosomes. The protein is Peptidyl-tRNA hydrolase of Solidesulfovibrio magneticus (strain ATCC 700980 / DSM 13731 / RS-1) (Desulfovibrio magneticus).